The following is a 433-amino-acid chain: MNLLIKNVNLLSMEEDKVLEGVNVYVEGDTIKHIGELLPDVKVDVVIEGKDKLAMPGLINAHTHLGMSLFRNYANDVPLFDWLTKYIWPLEARLTAEDVYWGSLLSMIEMIYSGTTTYCDMYFFMEEVAKATEEIGIRGVISRGIIEEQDAKVNEEKLKDTENLYNAWNGKAEGRIKVMVGPHAPYTCGPTYLKEILDLAKRLGTGIHIHVSETKREVEESLEKYGKTPVQHLKDLGIFEVPTVAAHCVHLTDEDIEVLKEMKVSPVYNPTSNLKLASGFAPVEKMLKKGINVALGTDGPASNNNLNMFEEIHFAATINKALNEDALSVPAFEALKMATVSGARALLWEREIGTIEVGKKADVILIDLNKPHLHPKNDLISALAYSVQGSDVDTVIVNGKVIMEKREIKTVDVERVYYEVEKRAQNLIRGEIS.

Positions 62 and 64 each coordinate Zn(2+). Residues Glu91, Arg143, and His183 each coordinate substrate. His210 lines the Zn(2+) pocket. Positions 213 and 298 each coordinate substrate. Residue Asp298 coordinates Zn(2+).

Belongs to the metallo-dependent hydrolases superfamily. MTA/SAH deaminase family. Zn(2+) is required as a cofactor.

The enzyme catalyses S-adenosyl-L-homocysteine + H2O + H(+) = S-inosyl-L-homocysteine + NH4(+). The catalysed reaction is S-methyl-5'-thioadenosine + H2O + H(+) = S-methyl-5'-thioinosine + NH4(+). Its function is as follows. Catalyzes the deamination of 5-methylthioadenosine and S-adenosyl-L-homocysteine into 5-methylthioinosine and S-inosyl-L-homocysteine, respectively. Is also able to deaminate adenosine. The polypeptide is 5-methylthioadenosine/S-adenosylhomocysteine deaminase (Caldanaerobacter subterraneus subsp. tengcongensis (strain DSM 15242 / JCM 11007 / NBRC 100824 / MB4) (Thermoanaerobacter tengcongensis)).